A 496-amino-acid chain; its full sequence is Aspartyl/glutamyl-tRNA(Asn/Gln) amidotransferase subunit B (496 aa).

The protein belongs to the GatB/GatE family. GatB subfamily. In terms of assembly, heterotrimer of A, B and C subunits.

The enzyme catalyses L-glutamyl-tRNA(Gln) + L-glutamine + ATP + H2O = L-glutaminyl-tRNA(Gln) + L-glutamate + ADP + phosphate + H(+). It catalyses the reaction L-aspartyl-tRNA(Asn) + L-glutamine + ATP + H2O = L-asparaginyl-tRNA(Asn) + L-glutamate + ADP + phosphate + 2 H(+). Allows the formation of correctly charged Asn-tRNA(Asn) or Gln-tRNA(Gln) through the transamidation of misacylated Asp-tRNA(Asn) or Glu-tRNA(Gln) in organisms which lack either or both of asparaginyl-tRNA or glutaminyl-tRNA synthetases. The reaction takes place in the presence of glutamine and ATP through an activated phospho-Asp-tRNA(Asn) or phospho-Glu-tRNA(Gln). This is Aspartyl/glutamyl-tRNA(Asn/Gln) amidotransferase subunit B from Xanthobacter autotrophicus (strain ATCC BAA-1158 / Py2).